The primary structure comprises 132 residues: MQTQIKVRGYHLDVYQHVNNARYLEFLEEARWDGLENSDSFQWMTAHNIAFVVVNININYRRPAVLSDLLTITSQLQQLNGKSGILSQVITLEPEGQVVADALITFVCIDLKTQKALALEGELREKLEQMVK.

Asp-13 is a catalytic residue.

This sequence belongs to the 4-hydroxybenzoyl-CoA thioesterase family. Homotetramer.

It carries out the reaction (3E,5Z)-tetradecadienoyl-CoA + H2O = (3E,5Z)-tetradecadienoate + CoA + H(+). It catalyses the reaction (3E,5Z)-dodecadienoyl-CoA + H2O = (3E,5Z)-dodecadienoate + CoA + H(+). The catalysed reaction is (9Z)-octadecenoyl-CoA + H2O = (9Z)-octadecenoate + CoA + H(+). The enzyme catalyses octadecanoyl-CoA + H2O = octadecanoate + CoA + H(+). It carries out the reaction hexadecanoyl-CoA + H2O = hexadecanoate + CoA + H(+). It catalyses the reaction (3S)-hydroxytetradecanoyl-CoA + H2O = (3S)-hydroxytetradecanoate + CoA + H(+). The catalysed reaction is tetradecanoyl-CoA + H2O = tetradecanoate + CoA + H(+). In terms of biological role, long-chain acyl-CoA thioesterase that could be involved in beta-oxidation of fatty acids. Is most active with 3,5-tetradecadienoyl-CoA, a metabolite of oleic acid that is hydrolyzed during oleate beta-oxidation, but can also use other substrates such as 3,5-dodecadienoyl-CoA, 9-cis-octadecenoyl-CoA, octadecanoyl-CoA, hexadecanoyl-CoA, 3-hydroxytetradecanoyl-CoA and tetradecanoyl-CoA. This Escherichia coli (strain K12) protein is Long-chain acyl-CoA thioesterase FadM.